A 161-amino-acid chain; its full sequence is Small ribosomal subunit protein uS9 (161 aa).

The protein belongs to the universal ribosomal protein uS9 family.

The sequence is that of Small ribosomal subunit protein uS9 from Bartonella henselae (strain ATCC 49882 / DSM 28221 / CCUG 30454 / Houston 1) (Rochalimaea henselae).